Here is a 141-residue protein sequence, read N- to C-terminus: Large ribosomal subunit protein uL11 (141 aa).

The protein belongs to the universal ribosomal protein uL11 family. In terms of assembly, part of the ribosomal stalk of the 50S ribosomal subunit. Interacts with L10 and the large rRNA to form the base of the stalk. L10 forms an elongated spine to which L12 dimers bind in a sequential fashion forming a multimeric L10(L12)X complex. One or more lysine residues are methylated.

Functionally, forms part of the ribosomal stalk which helps the ribosome interact with GTP-bound translation factors. The polypeptide is Large ribosomal subunit protein uL11 (Prochlorococcus marinus (strain SARG / CCMP1375 / SS120)).